A 409-amino-acid polypeptide reads, in one-letter code: 4-hydroxy-3-methylbut-2-en-1-yl diphosphate synthase (flavodoxin) (409 aa).

[4Fe-4S] cluster is bound by residues C298, C301, C344, and E351.

This sequence belongs to the IspG family. [4Fe-4S] cluster serves as cofactor.

It catalyses the reaction (2E)-4-hydroxy-3-methylbut-2-enyl diphosphate + oxidized [flavodoxin] + H2O + 2 H(+) = 2-C-methyl-D-erythritol 2,4-cyclic diphosphate + reduced [flavodoxin]. The protein operates within isoprenoid biosynthesis; isopentenyl diphosphate biosynthesis via DXP pathway; isopentenyl diphosphate from 1-deoxy-D-xylulose 5-phosphate: step 5/6. In terms of biological role, converts 2C-methyl-D-erythritol 2,4-cyclodiphosphate (ME-2,4cPP) into 1-hydroxy-2-methyl-2-(E)-butenyl 4-diphosphate. This Dechloromonas aromatica (strain RCB) protein is 4-hydroxy-3-methylbut-2-en-1-yl diphosphate synthase (flavodoxin).